The following is a 526-amino-acid chain: Light-independent protochlorophyllide reductase subunit B (526 aa).

D36 contacts [4Fe-4S] cluster. Residue D290 is the Proton donor of the active site. 425–426 contributes to the substrate binding site; that stretch reads GL.

Belongs to the ChlB/BchB/BchZ family. Protochlorophyllide reductase is composed of three subunits; ChlL, ChlN and ChlB. Forms a heterotetramer of two ChlB and two ChlN subunits. [4Fe-4S] cluster serves as cofactor.

The catalysed reaction is chlorophyllide a + oxidized 2[4Fe-4S]-[ferredoxin] + 2 ADP + 2 phosphate = protochlorophyllide a + reduced 2[4Fe-4S]-[ferredoxin] + 2 ATP + 2 H2O. Its pathway is porphyrin-containing compound metabolism; chlorophyll biosynthesis (light-independent). Component of the dark-operative protochlorophyllide reductase (DPOR) that uses Mg-ATP and reduced ferredoxin to reduce ring D of protochlorophyllide (Pchlide) to form chlorophyllide a (Chlide). This reaction is light-independent. The NB-protein (ChlN-ChlB) is the catalytic component of the complex. The chain is Light-independent protochlorophyllide reductase subunit B from Prochlorococcus marinus subsp. pastoris (strain CCMP1986 / NIES-2087 / MED4).